A 275-amino-acid polypeptide reads, in one-letter code: Dermonecrotic toxin SpeSicTox-betaIIA2i (275 aa).

H5 is an active-site residue. Positions 25 and 27 each coordinate Mg(2+). The Nucleophile role is filled by H41. Disulfide bonds link C45–C51 and C47–C190. D85 contacts Mg(2+).

Belongs to the arthropod phospholipase D family. Class II subfamily. It depends on Mg(2+) as a cofactor. In terms of tissue distribution, expressed by the venom gland.

Its subcellular location is the secreted. It carries out the reaction an N-(acyl)-sphingosylphosphocholine = an N-(acyl)-sphingosyl-1,3-cyclic phosphate + choline. It catalyses the reaction an N-(acyl)-sphingosylphosphoethanolamine = an N-(acyl)-sphingosyl-1,3-cyclic phosphate + ethanolamine. The catalysed reaction is a 1-acyl-sn-glycero-3-phosphocholine = a 1-acyl-sn-glycero-2,3-cyclic phosphate + choline. The enzyme catalyses a 1-acyl-sn-glycero-3-phosphoethanolamine = a 1-acyl-sn-glycero-2,3-cyclic phosphate + ethanolamine. Its function is as follows. Dermonecrotic toxins cleave the phosphodiester linkage between the phosphate and headgroup of certain phospholipids (sphingolipid and lysolipid substrates), forming an alcohol (often choline) and a cyclic phosphate. This toxin acts on sphingomyelin (SM). It may also act on ceramide phosphoethanolamine (CPE), lysophosphatidylcholine (LPC) and lysophosphatidylethanolamine (LPE), but not on lysophosphatidylserine (LPS), and lysophosphatidylglycerol (LPG). It acts by transphosphatidylation, releasing exclusively cyclic phosphate products as second products. Induces dermonecrosis, hemolysis, increased vascular permeability, edema, inflammatory response, and platelet aggregation. This Sicarius peruensis (Six-eyed sand spider) protein is Dermonecrotic toxin SpeSicTox-betaIIA2i.